We begin with the raw amino-acid sequence, 488 residues long: Probable apyrase 5 (488 aa).

The interval 1 to 26 (MDALKVQILPDNQSSPSSTHMLTKPK) is disordered. The Cytoplasmic segment spans residues 1–32 (MDALKVQILPDNQSSPSSTHMLTKPKSKKATK). Polar residues predominate over residues 10–21 (PDNQSSPSSTHM). Residues 33–53 (SIAMLIVASLAITLGLLFVFS) traverse the membrane as a helical; Signal-anchor for type II membrane protein segment. The Extracellular portion of the chain corresponds to 54 to 488 (SNSVMFSASF…GKSRKMIGFK (435 aa)). Residue 73–83 (VIIDAGSSGTR) participates in ATP binding. Glu-196 functions as the Proton acceptor in the catalytic mechanism. 220–230 (GIVELGGASAQ) provides a ligand contact to ATP. Asn-251 carries N-linked (GlcNAc...) asparagine glycosylation.

Belongs to the GDA1/CD39 NTPase family. It depends on Ca(2+) as a cofactor. As to expression, highly expressed in young rosette leaves but only weakly in roots.

The protein localises to the membrane. The catalysed reaction is a ribonucleoside 5'-triphosphate + 2 H2O = a ribonucleoside 5'-phosphate + 2 phosphate + 2 H(+). In terms of biological role, catalyzes the hydrolysis of phosphoanhydride bonds of nucleoside tri- and di-phosphates. This is Probable apyrase 5 (APY5) from Arabidopsis thaliana (Mouse-ear cress).